The sequence spans 325 residues: Acetyl-coenzyme A carboxylase carboxyl transferase subunit alpha (325 aa).

The CoA carboxyltransferase C-terminal domain occupies 35-292 (EIEKLEARLA…DKVLKRSLKQ (258 aa)).

It belongs to the AccA family. As to quaternary structure, acetyl-CoA carboxylase is a heterohexamer composed of biotin carboxyl carrier protein (AccB), biotin carboxylase (AccC) and two subunits each of ACCase subunit alpha (AccA) and ACCase subunit beta (AccD).

It localises to the cytoplasm. The catalysed reaction is N(6)-carboxybiotinyl-L-lysyl-[protein] + acetyl-CoA = N(6)-biotinyl-L-lysyl-[protein] + malonyl-CoA. The protein operates within lipid metabolism; malonyl-CoA biosynthesis; malonyl-CoA from acetyl-CoA: step 1/1. Functionally, component of the acetyl coenzyme A carboxylase (ACC) complex. First, biotin carboxylase catalyzes the carboxylation of biotin on its carrier protein (BCCP) and then the CO(2) group is transferred by the carboxyltransferase to acetyl-CoA to form malonyl-CoA. This chain is Acetyl-coenzyme A carboxylase carboxyl transferase subunit alpha, found in Geobacillus sp. (strain WCH70).